A 291-amino-acid chain; its full sequence is Putative carboxymethylenebutenolidase (291 aa).

The first 40 residues, 1–40, serve as a signal peptide directing secretion; sequence MTAFDADLRSLAAQTTLSRRTVIATSLATGFALAVQPVAA. Active-site residues include cysteine 170, aspartate 227, and histidine 259.

The protein belongs to the dienelactone hydrolase family.

The catalysed reaction is 2-(5-oxo-2,5-dihydrofuran-2-ylidene)acetate + H2O = 4-oxohex-2-enedioate + H(+). The sequence is that of Putative carboxymethylenebutenolidase from Methylorubrum extorquens (strain ATCC 14718 / DSM 1338 / JCM 2805 / NCIMB 9133 / AM1) (Methylobacterium extorquens).